The chain runs to 416 residues: MAIAERRSRSHLALRVRDRVSAEVFFEERFEDGWESKWVKSDWKRDENMAGEWNFTSGKWNGDANDKGIQTSEDYRFYAISAAFPEFSNKGKTLVFQFSVKHEQKLDCGGGYMKLLSGDVDQKKFGGDTPYSIMFGPDICGYSTKKVHAILTKGETNHLIKKDVPCETDQLTHVYTFILRPDASYSILIDNVEKQSGSVYTDWDILPPKQIKDPEAKKPEDWEDKEYIPDPEDKKPEGYDDIPKEITDPEAKKPEDWDDEEDGEWTAPTIPNPDYKGEWKPKKIKNPNFKGKWKAPMIDNPDFKDDPDIYVFPKLKYVGIELWQVKSGTMFDNVLICDDPDYAKKLAEETWGKNKDAEKAAFDEAEKKKEEEEAKDDPTESDDEKPDEEGESDGEGDDESKDIDNEEDDEDVHDEL.

The N-linked (GlcNAc...) asparagine glycan is linked to asparagine 54. A disulfide bond links cysteine 108 and cysteine 140. Positions 112, 114, 131, and 138 each coordinate an alpha-D-glucoside. A run of 7 repeats spans residues lysine 194–isoleucine 205, aspartate 213–aspartate 224, aspartate 230–aspartate 241, aspartate 248–aspartate 259, glycine 263–proline 273, glycine 277–proline 287, and glycine 291–proline 301. The interval lysine 194–aspartate 259 is 4 X approximate repeats. A disordered region spans residues lysine 209–proline 281. The segment covering glutamine 210 to glutamate 255 has biased composition (basic and acidic residues). The segment at glycine 263 to proline 301 is 3 X approximate repeats. Glutamate 321 is a binding site for an alpha-D-glucoside. The span at glutamate 349 to proline 378 shows a compositional bias: basic and acidic residues. The tract at residues glutamate 349–leucine 416 is disordered. The span at threonine 379 to leucine 416 shows a compositional bias: acidic residues. A Prevents secretion from ER motif is present at residues histidine 413–leucine 416.

This sequence belongs to the calreticulin family.

Its subcellular location is the endoplasmic reticulum lumen. In terms of biological role, molecular calcium-binding chaperone promoting folding, oligomeric assembly and quality control in the ER via the calreticulin/calnexin cycle. This lectin may interact transiently with almost all of the monoglucosylated glycoproteins that are synthesized in the ER. The polypeptide is Calreticulin (Berberis stolonifera (Barberry)).